We begin with the raw amino-acid sequence, 566 residues long: Transcription factor atf1 (566 aa).

Residues 1 to 42 show a composition bias toward polar residues; that stretch reads MSPSPVNTSTEPASVAAVSNGNATASSTQVPENNQSDSFAPP. Disordered stretches follow at residues 1-83, 96-117, 315-345, and 357-479; these read MSPS…FVGS, SFGS…PSLS, QQQT…PQAS, and SQQF…KSFL. The span at 43 to 53 shows a compositional bias: low complexity; it reads SNNSQQNQQSS. 2 stretches are compositionally biased toward polar residues: residues 65–76 and 97–106; these read ANANPADQSDGV and FGSTASVGQG. The span at 107–117 shows a compositional bias: low complexity; that stretch reads NPSLNRNPSLS. 2 stretches are compositionally biased toward polar residues: residues 379 to 412 and 421 to 460; these read TLRQ…TANS and TDYS…YSKG. Residues 466-479 show a composition bias toward basic and acidic residues; the sequence is SKNETDEEKRKSFL. A bZIP domain is found at 472-535; it reads EEKRKSFLER…VSLKTLLIAH (64 aa). Positions 474–503 are basic motif; that stretch reads KRKSFLERNRQAALKCRQRKKQWLSNLQAK. Residues 514 to 528 form a leucine-zipper region; sequence LSAQVSALREEIVSL.

The protein belongs to the bZIP family. In terms of assembly, heterodimer of pcr1/mts2 and atf1/mts1. Post-translationally, phosphorylated by sty1/spc1.

It localises to the nucleus. Functionally, transcription factor required for sexual development and entry into stationary phase. Binds and activates CRE sites (cAMP-response elements, also known as M26 meiotic recombination hotspots). The chain is Transcription factor atf1 (atf1) from Schizosaccharomyces pombe (strain 972 / ATCC 24843) (Fission yeast).